We begin with the raw amino-acid sequence, 155 residues long: Pathogenesis-related protein STH-21 (155 aa).

It belongs to the BetVI family.

In Solanum tuberosum (Potato), this protein is Pathogenesis-related protein STH-21 (STH-21).